The sequence spans 444 residues: Probable glycolate oxidase iron-sulfur subunit (444 aa).

4Fe-4S ferredoxin-type domains lie at 14-46 and 69-100; these read FKERMDEGELLNCMRCGFCLPSCPTYIESGFQE and EDVERSLSLCLGCRACEPVCPSGVKYGQLLEE. [4Fe-4S] cluster contacts are provided by C26, C29, C32, C36, C78, C81, C84, and C88.

In terms of assembly, the glycolate oxidase likely consists of several subunits including GlcD and GlcF. Requires [4Fe-4S] cluster as cofactor.

The protein resides in the cell membrane. The catalysed reaction is glycolate + A = glyoxylate + AH2. The enzyme catalyses (R)-lactate + A = pyruvate + AH2. Component of a complex that catalyzes the oxidation of glycolate to glyoxylate. Is also able to oxidize D-lactate ((R)-lactate). Does not link directly to O(2), and 2,6-dichloroindophenol (DCIP) and phenazine methosulfate (PMS) can act as artificial electron acceptors in vitro, but the physiological molecule that functions as primary electron acceptor during glycolate oxidation is unknown. In Bacillus subtilis (strain 168), this protein is Probable glycolate oxidase iron-sulfur subunit (glcF).